The primary structure comprises 241 residues: Sugar fermentation stimulation protein homolog (241 aa).

It belongs to the SfsA family.

The protein is Sugar fermentation stimulation protein homolog of Nostoc sp. (strain PCC 7120 / SAG 25.82 / UTEX 2576).